A 375-amino-acid chain; its full sequence is 23S rRNA (uracil(747)-C(5))-methyltransferase RlmC (375 aa).

[4Fe-4S] cluster contacts are provided by C3, C11, C14, and C87. 4 residues coordinate S-adenosyl-L-methionine: Q212, F241, E262, and N307. Residue C334 is the Nucleophile of the active site.

It belongs to the class I-like SAM-binding methyltransferase superfamily. RNA M5U methyltransferase family. RlmC subfamily.

It catalyses the reaction uridine(747) in 23S rRNA + S-adenosyl-L-methionine = 5-methyluridine(747) in 23S rRNA + S-adenosyl-L-homocysteine + H(+). Functionally, catalyzes the formation of 5-methyl-uridine at position 747 (m5U747) in 23S rRNA. This Shigella boydii serotype 4 (strain Sb227) protein is 23S rRNA (uracil(747)-C(5))-methyltransferase RlmC.